The primary structure comprises 367 residues: MEAERINLIGTTLEDLTERTQELRRYLDYDAKFERLRTVNASLEDPAVWNDPKKAQELGKEKKSLDAVVLTLQKLTTELADNAELYEMSKEEGDEAGLTTIEAEAEKLRPLIEELEFRRMFSNEADPLNCFVDIQAGAGGTEACDWASMLLRQYLKYAERKGFKATVEEETPGDVAGIKSATIKIEGEYAYGLLRTETGVHRLVRKSPFDSSGGRHTSFASLFVYPEIDDSIEININPSDVRTDTYRASGAGGQHINKTDSAVRLTHIPTGIVVQCQDGRSQHSNRDVAWQRLRSRLYDFEMRKRMEEQQKLEDTKTDVGWGHQIRSYVLDNSRIKDLRTNVEVSATQKVLDGDLDVFIEASLKQGV.

Position 254 is an N5-methylglutamine (glutamine 254).

It belongs to the prokaryotic/mitochondrial release factor family. Post-translationally, methylated by PrmC. Methylation increases the termination efficiency of RF2.

The protein resides in the cytoplasm. In terms of biological role, peptide chain release factor 2 directs the termination of translation in response to the peptide chain termination codons UGA and UAA. The chain is Peptide chain release factor 2 from Acidovorax ebreus (strain TPSY) (Diaphorobacter sp. (strain TPSY)).